Consider the following 203-residue polypeptide: Large ribosomal subunit protein bL25 (203 aa).

Belongs to the bacterial ribosomal protein bL25 family. CTC subfamily. As to quaternary structure, part of the 50S ribosomal subunit; part of the 5S rRNA/L5/L18/L25 subcomplex. Contacts the 5S rRNA. Binds to the 5S rRNA independently of L5 and L18.

This is one of the proteins that binds to the 5S RNA in the ribosome where it forms part of the central protuberance. This is Large ribosomal subunit protein bL25 from Rickettsia typhi (strain ATCC VR-144 / Wilmington).